The primary structure comprises 504 residues: MSFSVDVLANIAIELQRGIGHQDRFQRLITTLRQVLECDASALLRYDSRQFIPLAIDGLAKDVLGRRFALEGHPRLEAIARAGDVVRFPADSELPDPYDGLIPGQESLKVHACVGLPLFAGQNLIGALTLDGMQPDQFDVFSDEELRLIAALAAGALSNALLIEQLESQNMMPGDATPFEAVKQTQMIGLSPGMTQLKKEIEIVAASDLNVLISGETGTGKELVAKAIHEASPRAVNPLVYLNCAALPESVAESELFGHVKGAFTGAISNRSGKFEMADNGTLFLDEIGELSLALQAKLLRVLQYGDIQRVGDDRSLRVDVRVLAATNRDLREEVLAGRFRADLFHRLSVFPLSVPPLRERGDDVILLAGYFCEQCRLRLGLSRVVLSAGARNLLQHYRFPGNVRELEHAIHRAVVLSRATRNGDEVILEAQHFAFPEVTLPPPEAAAVPVVKQNLREATEAFQRETIRQALAQNHHNWAACARMLETDVANLHRLAKRLGMKD.

Asp-57 bears the 4-aspartylphosphate mark. One can recognise a Sigma-54 factor interaction domain in the interval 187–416 (MIGLSPGMTQ…LEHAIHRAVV (230 aa)). ATP-binding positions include 215–222 (GETGTGKE) and 278–287 (ADNGTLFLDE). Residues 479–498 (WAACARMLETDVANLHRLAK) constitute a DNA-binding region (H-T-H motif).

The protein operates within nitrogen metabolism; nitric oxide reduction. Its function is as follows. Required for the expression of anaerobic nitric oxide (NO) reductase, acts as a transcriptional activator for at least the norVW operon. Activation also requires sigma-54. This Escherichia coli (strain 55989 / EAEC) protein is Anaerobic nitric oxide reductase transcription regulator NorR.